The sequence spans 2230 residues: DNA polymerase epsilon catalytic subunit A (2230 aa).

Residues 1–19 (MPTRQPSKYGNKFRSSSAS) are compositionally biased toward polar residues. Residues 1–24 (MPTRQPSKYGNKFRSSSASFKPKR) are disordered. Zn(2+) is bound by residues Cys2101, Cys2104, Cys2136, and Cys2139. The CysA-type zinc-finger motif lies at 2101-2139 (CNACCLIRDLDLCRDEDVLPEMGSDPNKAAPKPWRCPFC). 4 residues coordinate [4Fe-4S] cluster: Cys2170, Cys2173, Cys2185, and Cys2187. Positions 2170–2187 (CSKCGGLKISDFMEHCSC) match the CysB motif motif.

The protein belongs to the DNA polymerase type-B family. Heterotetramer. Consists of 4 subunits: pol2, dpb2, dpb3 and dpb4. The cofactor is [4Fe-4S] cluster.

It localises to the nucleus. It carries out the reaction DNA(n) + a 2'-deoxyribonucleoside 5'-triphosphate = DNA(n+1) + diphosphate. Its function is as follows. DNA polymerase II participates in chromosomal DNA replication. The protein is DNA polymerase epsilon catalytic subunit A (pol2) of Aspergillus fumigatus (strain ATCC MYA-4609 / CBS 101355 / FGSC A1100 / Af293) (Neosartorya fumigata).